The following is a 252-amino-acid chain: tRNA pseudouridine synthase A (252 aa).

Asp54 acts as the Nucleophile in catalysis. Tyr112 is a binding site for substrate.

It belongs to the tRNA pseudouridine synthase TruA family. As to quaternary structure, homodimer.

It catalyses the reaction uridine(38/39/40) in tRNA = pseudouridine(38/39/40) in tRNA. Its function is as follows. Formation of pseudouridine at positions 38, 39 and 40 in the anticodon stem and loop of transfer RNAs. The sequence is that of tRNA pseudouridine synthase A from Oenococcus oeni (strain ATCC BAA-331 / PSU-1).